The primary structure comprises 409 residues: Serine/threonine transporter SstT (409 aa).

The next 9 helical transmembrane spans lie at 17-37 (LVGQIIVGLIAGLLLASFFPA), 49-69 (FVSALKAVAPVLVFVLVMASI), 83-103 (ILLLYLVGTFSAAVVAVIASF), 142-162 (ALISANFIGILAWAIGLGIAF), 180-200 (VSLIVKVVIRFAPLGIFGLVA), 218-238 (LVVLLGCMLFVAFVVNPLIVF), 301-321 (GAAITITVLTLAAVHTLGIAV), 331-351 (VVASICACGASGVAGGSLLLI), and 357-377 (LFGIPSEVAMQVVAVGFIIAI).

This sequence belongs to the dicarboxylate/amino acid:cation symporter (DAACS) (TC 2.A.23) family.

Its subcellular location is the cell inner membrane. It carries out the reaction L-serine(in) + Na(+)(in) = L-serine(out) + Na(+)(out). The catalysed reaction is L-threonine(in) + Na(+)(in) = L-threonine(out) + Na(+)(out). Functionally, involved in the import of serine and threonine into the cell, with the concomitant import of sodium (symport system). This chain is Serine/threonine transporter SstT, found in Pseudomonas aeruginosa (strain LESB58).